The sequence spans 29 residues: Tail virion protein G7P (29 aa).

The chain crosses the membrane as a helical span at residues 8–28 (VVIALGLVISFGLGAITAGVL).

The protein belongs to the inovirus G7P protein family.

Its subcellular location is the virion. It localises to the host membrane. Its function is as follows. May initiate with G9P the virion concomitant assembly-budding process, by interacting with the packaging signal of the viral genome. The assembly-budding takes place at the host inner membrane. In turn, G7P and G9P are present at the end of the filamentous virion that emerges first from the bacterial host. This chain is Tail virion protein G7P (VII), found in Escherichia coli (Bacteriophage I2-2).